The chain runs to 410 residues: Structure-specific endonuclease subunit SLX1 homolog (410 aa).

One can recognise a GIY-YIG domain in the interval 6–89; that stretch reads QLHYCYFLLS…NICKVTRDNI (84 aa).

The protein belongs to the SLX1 family. Forms a heterodimer with a member of the SLX4 family. Requires a divalent metal cation as cofactor.

It is found in the nucleus. Its function is as follows. Catalytic subunit of a heterodimeric structure-specific endonuclease that resolves DNA secondary structures generated during DNA repair and recombination. Has endonuclease activity towards branched DNA substrates, introducing single-strand cuts in duplex DNA close to junctions with ss-DNA. The sequence is that of Structure-specific endonuclease subunit SLX1 homolog from Cryptosporidium parvum (strain Iowa II).